Reading from the N-terminus, the 262-residue chain is WUSCHEL-related homeobox 11 (262 aa).

Residues 1–11 (MDGGHSPDRHA) are compositionally biased toward basic and acidic residues. Disordered stretches follow at residues 1 to 21 (MDGGHSPDRHAAAAAGEPVRS) and 79 to 115 (RRRQRQLQAQAQAAAAAASSGSPPTASSGGLAPGHAG). Positions 18–82 (PVRSRWTPKP…NRRSRSRRRQ (65 aa)) form a DNA-binding region, homeobox. A compositionally biased stretch (low complexity) spans 84–112 (QLQAQAQAAAAAASSGSPPTASSGGLAPG).

It belongs to the WUS homeobox family. Interacts with ERF3.

It is found in the nucleus. Its function is as follows. Transcription factor which may be involved in developmental processes. Promotes the development of crown roots (both initiation and elongation), main components of the fibrous root system, by regulating the expression of genes required for crown root development and hormone-responsive genes involved in cytokinin (e.g. RR1, RR2, RR3 and RR4) and auxin (e.g. IAA5, IAA11, IAA23 and IAA31) signaling. The protein is WUSCHEL-related homeobox 11 of Oryza sativa subsp. indica (Rice).